Consider the following 523-residue polypeptide: Probable 3-ketoacyl-CoA synthase 20 (523 aa).

Transmembrane regions (helical) follow at residues 31–55 (IVAV…AAGG) and 78–96 (ALAV…YAAS). Residues 93–382 (YAASRPRPVY…RFLATVVLKR (290 aa)) enclose the FAE domain. Catalysis depends on residues C237, H317, H401, H405, and N438.

It belongs to the thiolase-like superfamily. Chalcone/stilbene synthases family. As to expression, highly expressed in leaf sheaths. Expressed in leaves, flag leaves and panicles.

It localises to the membrane. The catalysed reaction is a very-long-chain acyl-CoA + malonyl-CoA + H(+) = a very-long-chain 3-oxoacyl-CoA + CO2 + CoA. In terms of biological role, contributes to fatty acids elongation. Plays a role in controlling leaf anatomy and plant architecture. The protein is Probable 3-ketoacyl-CoA synthase 20 of Oryza sativa subsp. japonica (Rice).